The following is a 173-amino-acid chain: Lipoprotein signal peptidase (173 aa).

3 consecutive transmembrane segments (helical) span residues 9 to 29 (LPFL…ILVV), 37 to 57 (VIPV…GAAF), and 70 to 90 (ILLV…YLKS). Catalysis depends on residues aspartate 124 and aspartate 146. A helical membrane pass occupies residues 142-162 (FNAADSFIVCCGIGLGVNLIL).

Belongs to the peptidase A8 family.

It is found in the cell inner membrane. It carries out the reaction Release of signal peptides from bacterial membrane prolipoproteins. Hydrolyzes -Xaa-Yaa-Zaa-|-(S,diacylglyceryl)Cys-, in which Xaa is hydrophobic (preferably Leu), and Yaa (Ala or Ser) and Zaa (Gly or Ala) have small, neutral side chains.. It participates in protein modification; lipoprotein biosynthesis (signal peptide cleavage). This protein specifically catalyzes the removal of signal peptides from prolipoproteins. The chain is Lipoprotein signal peptidase from Treponema denticola (strain ATCC 35405 / DSM 14222 / CIP 103919 / JCM 8153 / KCTC 15104).